The following is a 124-amino-acid chain: Protein MGF 110-4L-B (124 aa).

A signal peptide spans 1-18 (MLVIFLGILGLLANQVLG). N64 carries N-linked (GlcNAc...) asparagine; by host glycosylation. The Prevents secretion from ER signature appears at 121-124 (KEDL).

The protein belongs to the asfivirus MGF 110 family.

Its subcellular location is the virion. The protein resides in the host endoplasmic reticulum-Golgi intermediate compartment. Functionally, causes the redistribution of lumenal ER protein to an enlarged ERGIC compartment. The protein is Protein MGF 110-4L-B of African swine fever virus (isolate Portugal/Lis 57/1957) (ASFV).